Here is an 89-residue protein sequence, read N- to C-terminus: Small ribosomal subunit protein uS15 (89 aa).

Belongs to the universal ribosomal protein uS15 family. As to quaternary structure, part of the 30S ribosomal subunit. Forms a bridge to the 50S subunit in the 70S ribosome, contacting the 23S rRNA.

Its function is as follows. One of the primary rRNA binding proteins, it binds directly to 16S rRNA where it helps nucleate assembly of the platform of the 30S subunit by binding and bridging several RNA helices of the 16S rRNA. In terms of biological role, forms an intersubunit bridge (bridge B4) with the 23S rRNA of the 50S subunit in the ribosome. The sequence is that of Small ribosomal subunit protein uS15 from Bordetella parapertussis (strain 12822 / ATCC BAA-587 / NCTC 13253).